Reading from the N-terminus, the 348-residue chain is Methylthioribose-1-phosphate isomerase (348 aa).

Substrate contacts are provided by residues 47 to 49 (RGA), Arg-90, and Gln-196. The Proton donor role is filled by Asp-237. Residue 247–248 (NK) participates in substrate binding.

It belongs to the eIF-2B alpha/beta/delta subunits family. MtnA subfamily.

The catalysed reaction is 5-(methylsulfanyl)-alpha-D-ribose 1-phosphate = 5-(methylsulfanyl)-D-ribulose 1-phosphate. It functions in the pathway amino-acid biosynthesis; L-methionine biosynthesis via salvage pathway; L-methionine from S-methyl-5-thio-alpha-D-ribose 1-phosphate: step 1/6. In terms of biological role, catalyzes the interconversion of methylthioribose-1-phosphate (MTR-1-P) into methylthioribulose-1-phosphate (MTRu-1-P). In Synechococcus sp. (strain ATCC 27144 / PCC 6301 / SAUG 1402/1) (Anacystis nidulans), this protein is Methylthioribose-1-phosphate isomerase.